A 637-amino-acid polypeptide reads, in one-letter code: Chaperone protein HtpG (637 aa).

The a; substrate-binding stretch occupies residues 1-345; that stretch reads MSQQETHGFQ…SNDLPLNVSR (345 aa). The interval 346 to 562 is b; that stretch reads EILQDNHITK…EGEMSTQMIK (217 aa). Residues 563–637 form a c region; it reads LMQAAGQPVP…MNQMLLANLK (75 aa).

This sequence belongs to the heat shock protein 90 family. As to quaternary structure, homodimer.

The protein localises to the cytoplasm. In terms of biological role, molecular chaperone. Has ATPase activity. In Shewanella oneidensis (strain ATCC 700550 / JCM 31522 / CIP 106686 / LMG 19005 / NCIMB 14063 / MR-1), this protein is Chaperone protein HtpG.